Here is a 479-residue protein sequence, read N- to C-terminus: Sulfate adenylyltransferase subunit 1 (479 aa).

The tr-type G domain occupies 25 to 239 (KSLLRFLTCG…EVLETVDIQR (215 aa)). The tract at residues 34-41 (GSVDDGKS) is G1. A GTP-binding site is contributed by 34 to 41 (GSVDDGKS). The G2 stretch occupies residues 92-96 (GITID). Residues 113–116 (DTPG) form a G3 region. Residues 113–117 (DTPGH) and 168–171 (NKMD) contribute to the GTP site. Positions 168–171 (NKMD) are G4. The segment at 206 to 208 (SAL) is G5.

It belongs to the TRAFAC class translation factor GTPase superfamily. Classic translation factor GTPase family. CysN/NodQ subfamily. In terms of assembly, heterodimer composed of CysD, the smaller subunit, and CysN.

The catalysed reaction is sulfate + ATP + H(+) = adenosine 5'-phosphosulfate + diphosphate. The protein operates within sulfur metabolism; hydrogen sulfide biosynthesis; sulfite from sulfate: step 1/3. With CysD forms the ATP sulfurylase (ATPS) that catalyzes the adenylation of sulfate producing adenosine 5'-phosphosulfate (APS) and diphosphate, the first enzymatic step in sulfur assimilation pathway. APS synthesis involves the formation of a high-energy phosphoric-sulfuric acid anhydride bond driven by GTP hydrolysis by CysN coupled to ATP hydrolysis by CysD. In Salmonella heidelberg (strain SL476), this protein is Sulfate adenylyltransferase subunit 1.